The sequence spans 516 residues: Methionine--tRNA ligase (516 aa).

The 'HIGH' region motif lies at 14–24 (SYPNGKPHIGH). The short motif at 302–306 (KMSKS) is the 'KMSKS' region element. Lysine 305 provides a ligand contact to ATP.

Belongs to the class-I aminoacyl-tRNA synthetase family. MetG type 2B subfamily. In terms of assembly, monomer.

It localises to the cytoplasm. The catalysed reaction is tRNA(Met) + L-methionine + ATP = L-methionyl-tRNA(Met) + AMP + diphosphate. In terms of biological role, is required not only for elongation of protein synthesis but also for the initiation of all mRNA translation through initiator tRNA(fMet) aminoacylation. The chain is Methionine--tRNA ligase from Rhizobium meliloti (strain 1021) (Ensifer meliloti).